A 33-amino-acid polypeptide reads, in one-letter code: Photosystem II reaction center protein T (33 aa).

Residues 3-23 traverse the membrane as a helical segment; that stretch reads ALVYTFLLVSTLGIIFFAIFF.

Belongs to the PsbT family. In terms of assembly, PSII is composed of 1 copy each of membrane proteins PsbA, PsbB, PsbC, PsbD, PsbE, PsbF, PsbH, PsbI, PsbJ, PsbK, PsbL, PsbM, PsbT, PsbY, PsbZ, Psb30/Ycf12, at least 3 peripheral proteins of the oxygen-evolving complex and a large number of cofactors. It forms dimeric complexes.

The protein resides in the plastid. It is found in the chloroplast thylakoid membrane. Found at the monomer-monomer interface of the photosystem II (PS II) dimer, plays a role in assembly and dimerization of PSII. PSII is a light-driven water plastoquinone oxidoreductase, using light energy to abstract electrons from H(2)O, generating a proton gradient subsequently used for ATP formation. The polypeptide is Photosystem II reaction center protein T (Helianthus annuus (Common sunflower)).